Reading from the N-terminus, the 342-residue chain is Erlin-1 (342 aa).

Over 1-6 the chain is Cytoplasmic; sequence MAHVGA. Residues 7–23 traverse the membrane as a helical segment; it reads VVAAMAGLMAILLHSSI. Residues 24-342 lie on the Lumenal side of the membrane; it reads HKIEEGHLAV…ASKPKASEGH (319 aa). A glycan (N-linked (GlcNAc...) asparagine) is linked at Asn-106. Positions 308 to 342 are disordered; the sequence is SSASRPAAGESEQLESLSMRESLKKASKPKASEGH.

This sequence belongs to the band 7/mec-2 family.

The protein localises to the endoplasmic reticulum membrane. Mediates the endoplasmic reticulum-associated degradation (ERAD) of inositol 1,4,5-trisphosphate receptors (IP3Rs). Involved in regulation of cellular cholesterol homeostasis by regulation the SREBP signaling pathway. Binds cholesterol and may promote ER retention of the SCAP-SREBF complex. In Danio rerio (Zebrafish), this protein is Erlin-1.